A 132-amino-acid chain; its full sequence is Amicyanin (132 aa).

A signal peptide spans 1–26 (MISAKTLRPAIAAIALFAIGATGAWA). Gln-27 bears the Pyrrolidone carboxylic acid mark. The Plastocyanin-like domain maps to 27-132 (QDKITVTSEK…PFMRGKVIVE (106 aa)). The Cu cation site is built by His-80, Cys-119, His-122, and Met-125.

Requires Cu cation as cofactor.

It localises to the periplasm. The protein operates within one-carbon metabolism; methylamine degradation. Primary acceptor of electrons from methylamine dehydrogenase. Passes those electrons on either a soluble cytochrome c or to pseudoazurin. The chain is Amicyanin (mauC) from Paracoccus versutus (Thiobacillus versutus).